The primary structure comprises 220 residues: Metalloproteinase inhibitor 2 (220 aa).

The signal sequence occupies residues 1-26 (MGAAARSLPLAFCLLLLGTLLPRADA). A Zn(2+)-binding site is contributed by Cys-27. An involved in metalloproteinase-binding region spans residues 27–30 (CSCS). 6 disulfide bridges follow: Cys-27–Cys-98, Cys-29–Cys-127, Cys-39–Cys-152, Cys-154–Cys-201, Cys-159–Cys-164, and Cys-172–Cys-193. The NTR domain occupies 27 to 152 (CSCSPVHPQQ…SLNHRYQMGC (126 aa)).

Belongs to the protease inhibitor I35 (TIMP) family. In terms of assembly, interacts (via the C-terminal) with MMP2 (via the C-terminal PEX domain); the interaction inhibits the MMP2 activity. Post-translationally, the activity of TIMP2 is dependent on the presence of disulfide bonds.

Its subcellular location is the secreted. In terms of biological role, complexes with metalloproteinases (such as collagenases) and irreversibly inactivates them by binding to their catalytic zinc cofactor. The polypeptide is Metalloproteinase inhibitor 2 (TIMP2) (Bos taurus (Bovine)).